Here is a 545-residue protein sequence, read N- to C-terminus: Adenine deaminase (545 aa).

The protein belongs to the metallo-dependent hydrolases superfamily. Adenine deaminase family. Requires Mn(2+) as cofactor.

The catalysed reaction is adenine + H2O + H(+) = hypoxanthine + NH4(+). This chain is Adenine deaminase, found in Parabacteroides distasonis (strain ATCC 8503 / DSM 20701 / CIP 104284 / JCM 5825 / NCTC 11152).